A 94-amino-acid polypeptide reads, in one-letter code: Selenoprotein K (94 aa).

A helical transmembrane segment spans residues Leu20–Leu42. The interval Lys48–Arg94 is disordered. Position 92 (Sec92) is a non-standard amino acid, selenocysteine.

This sequence belongs to the selenoprotein K family. Interacts with DERL1, DERL2, DERL3 and SELENOS. The SELENOK-SELENOS complex interacts with VCP. Interacts with ZDHHC6. In terms of processing, cleaved by CAPN2/m-calpain in resting macrophages but not in activated macrophages. Macrophage activation up-regulates expression of the calpain inhibitor CAST/calpastatin, resulting in inhibition of CAPN2 activity. Post-translationally, truncated SELENOK proteins produced by failed UGA/Sec decoding are ubiquitinated by the CRL2(KLHDC2) complex, which recognizes the diglycine (Gly-Gly) at the C-terminus of truncated SELENOK proteins.

The protein localises to the endoplasmic reticulum membrane. Its subcellular location is the cell membrane. In terms of biological role, required for Ca(2+) flux in immune cells and plays a role in T-cell proliferation and in T-cell and neutrophil migration. Involved in endoplasmic reticulum-associated degradation (ERAD) of soluble glycosylated proteins. Required for palmitoylation and cell surface expression of CD36 and involved in macrophage uptake of low-density lipoprotein and in foam cell formation. Together with ZDHHC6, required for palmitoylation of ITPR1 in immune cells, leading to regulate ITPR1 stability and function. Plays a role in protection of cells from ER stress-induced apoptosis. Protects cells from oxidative stress when overexpressed in cardiomyocytes. The polypeptide is Selenoprotein K (Rattus norvegicus (Rat)).